Reading from the N-terminus, the 1229-residue chain is ABC transporter B family member 3 (1229 aa).

Residues 22–42 traverse the membrane as a helical segment; sequence VLLMIVGSIGAIGNGVGFPLM. The ABC transmembrane type-1 1 domain occupies 25 to 313; sequence MIVGSIGAIG…TTPCLTAFAA (289 aa). A glycan (N-linked (GlcNAc...) asparagine) is linked at Asn-56. The next 5 membrane-spanning stretches (helical) occupy residues 73–93, 149–169, 172–192, 252–272, and 281–301; these read FVYL…CWMI, FIQL…KGWL, LVML…PIIV, GLGL…AIWF, and GYTG…SMSL. The 237-residue stretch at 348-584 folds into the ABC transporter 1 domain; it reads IELRDVCFSY…HEGAYAQLIR (237 aa). Residue 383 to 390 participates in ATP binding; the sequence is GESGSGKS. Asn-450 carries N-linked (GlcNAc...) asparagine glycosylation. Over residues 594-606 the composition is skewed to basic and acidic residues; it reads RLESSNELRDRSI. Positions 594 to 614 are disordered; sequence RLESSNELRDRSINRGSSRNI. Residue Asn-645 is glycosylated (N-linked (GlcNAc...) asparagine). The next 2 membrane-spanning stretches (helical) occupy residues 661 to 681 and 706 to 726; these read ILIL…IFGI and MIFV…TYLF. The ABC transmembrane type-1 2 domain maps to 662-949; that stretch reads LILGTLLGAV…ASSFAPDSSK (288 aa). The N-linked (GlcNAc...) asparagine glycan is linked to Asn-758. 3 consecutive transmembrane segments (helical) span residues 797–817, 888–908, and 923–943; these read IIAF…IPLI, GVGF…CFYV, and VFQV…ASSF. An ABC transporter 2 domain is found at 984-1222; the sequence is IELCHISFTY…EGGVYASLVQ (239 aa). 1019-1026 serves as a coordination point for ATP; it reads GESGSGKS. Asn-1073 and Asn-1173 each carry an N-linked (GlcNAc...) asparagine glycan.

This sequence belongs to the ABC transporter superfamily. ABCB family. Multidrug resistance exporter (TC 3.A.1.201) subfamily.

The protein localises to the membrane. This Arabidopsis thaliana (Mouse-ear cress) protein is ABC transporter B family member 3 (ABCB3).